A 1846-amino-acid chain; its full sequence is Peripheral-type benzodiazepine receptor-associated protein 1 (1846 aa).

Disordered stretches follow at residues 57–97, 281–318, and 560–628; these read EESS…GYSC, NQRE…DDVE, and GPKD…SEVE. The segment covering 576–587 has biased composition (polar residues); the sequence is PKSSEPALTTLT. A compositionally biased stretch (low complexity) spans 599–612; it reads SLSNSSRSESIHNS. The SH3 1 domain occupies 649-716; the sequence is ARIQVFLARY…PSNFVERVSD (68 aa). The disordered stretch occupies residues 726–785; it reads ELADSSHSSGPELSFLSGGGGGCSSGGQSSGGRSQPRPEEEAAGDELSLSPPPEGLGEPL. The segment covering 742–755 has biased composition (gly residues); sequence SGGGGGCSSGGQSS. Fibronectin type-III domains lie at 787–878, 880–972, and 977–1075; these read VPYP…AGAG, VPSQ…TLPA, and APLD…PALA. 7 disordered regions span residues 1084-1107, 1163-1219, 1243-1302, 1322-1476, 1492-1617, 1704-1755, and 1812-1846; these read SCLS…GLGD, EPTL…LDSG, HSRN…SDEE, SIPE…PESS, YDSE…QDLP, LTEA…AAQK, and VPSN…RVQC. The segment covering 1202–1219 has biased composition (basic and acidic residues); sequence TQKKPSIEACHGGDLDSG. The segment covering 1251–1265 has biased composition (acidic residues); sequence DIQEEEEEEEEEEEE. Positions 1270–1283 are enriched in polar residues; sequence PCSSQKQVAGNSIR. A compositionally biased stretch (acidic residues) spans 1324-1335; that stretch reads PEEEEEEEEEEG. Composition is skewed to basic and acidic residues over residues 1411-1420 and 1545-1577; these read RPQDPREHCS and AWEK…ESRG. The region spanning 1616 to 1684 is the SH3 2 domain; that stretch reads LPVRVFVALF…PCNMVAEVAV (69 aa). The segment covering 1705-1719 has biased composition (polar residues); sequence TEASGNGPSVYSSAH. One can recognise an SH3 3 domain in the interval 1755-1822; sequence KTSRPMVAAF…PSNFLEGPGP (68 aa). Residues 1817–1830 show a composition bias toward low complexity; that stretch reads LEGPGPESGSLESG.

Belongs to the RIMBP family. Interacts with RIMS1 and RIMS2. Interacts with TSPO. Interacts with CACNA1A. As to expression, predominantly expressed in the brain.

The protein localises to the cytoplasm. Its subcellular location is the mitochondrion. Its function is as follows. Required for synaptic transmission regulation. It probably controls the recruitement of voltage-gated calcium channels to the presynaptic membrane, and modulates neurotransmitter release. The chain is Peripheral-type benzodiazepine receptor-associated protein 1 from Mus musculus (Mouse).